The chain runs to 96 residues: Putative toxin Y4kP (96 aa).

The protein belongs to the RelE toxin family.

Its function is as follows. Toxic component of a type II toxin-antitoxin (TA) system. This is Putative toxin Y4kP from Sinorhizobium fredii (strain NBRC 101917 / NGR234).